The primary structure comprises 149 residues: Large ribosomal subunit protein uL15 (149 aa).

Residues 1–54 (MSLKLHNLKPTPNSRPEKHRKGRGHAAGKGKQAGKGQSGQNKRKGHRLGFEGGQ) form a disordered region. Over residues 17–28 (EKHRKGRGHAAG) the composition is skewed to basic residues.

It belongs to the universal ribosomal protein uL15 family. Part of the 50S ribosomal subunit.

Functionally, binds to the 23S rRNA. This is Large ribosomal subunit protein uL15 from Mycoplasmopsis synoviae (strain 53) (Mycoplasma synoviae).